Consider the following 1034-residue polypeptide: Ice nucleation protein InaU (1034 aa).

The tract at residues 162–993 is octapeptide periodicity; sequence ATYGSTLSGT…LTAGENSVLI (832 aa). 6 disordered regions span residues 260-287, 311-342, 356-383, 407-438, 452-480, and 570-597; these read YGST…KGSD, TQTA…GYGS, YGST…GSDL, and AREG…TGYG. Composition is skewed to polar residues over residues 261-286, 311-334, 357-382, 407-430, 453-480, and 580-592; these read GSTQ…QKGS, TQTA…QKGS, GSTQ…GSDL, and YGST…NSDL.

This sequence belongs to the bacterial ice nucleation protein family.

The protein localises to the cell outer membrane. In terms of biological role, ice nucleation proteins enable bacteria to nucleate crystallization in supercooled water. The sequence is that of Ice nucleation protein InaU (inaU) from Pantoea ananas (Erwinia uredovora).